Consider the following 452-residue polypeptide: tRNA modification GTPase MnmE (452 aa).

(6S)-5-formyl-5,6,7,8-tetrahydrofolate-binding residues include R21, E78, and K118. The TrmE-type G domain maps to 214–375; sequence GMKVVIAGRP…LREHLKKSMG (162 aa). A K(+)-binding site is contributed by N224. GTP contacts are provided by residues 224–229, 243–249, and 268–271; these read NAGKSS, TNIAGTT, and DTAG. Residue S228 coordinates Mg(2+). K(+) is bound by residues T243, I245, and T248. T249 lines the Mg(2+) pocket. K452 is a binding site for (6S)-5-formyl-5,6,7,8-tetrahydrofolate.

The protein belongs to the TRAFAC class TrmE-Era-EngA-EngB-Septin-like GTPase superfamily. TrmE GTPase family. In terms of assembly, homodimer. Heterotetramer of two MnmE and two MnmG subunits. It depends on K(+) as a cofactor.

It localises to the cytoplasm. In terms of biological role, exhibits a very high intrinsic GTPase hydrolysis rate. Involved in the addition of a carboxymethylaminomethyl (cmnm) group at the wobble position (U34) of certain tRNAs, forming tRNA-cmnm(5)s(2)U34. The sequence is that of tRNA modification GTPase MnmE from Actinobacillus pleuropneumoniae serotype 3 (strain JL03).